The sequence spans 508 residues: Photosystem II CP47 reaction center protein (508 aa).

6 helical membrane-spanning segments follow: residues 21-36 (AVHI…WAGS), 101-115 (IVFS…TWHW), 140-156 (GIHL…FGAF), 203-218 (VAAG…FHLS), 237-252 (VLSS…AFIV), and 457-472 (TFAL…HGAR).

Belongs to the PsbB/PsbC family. PsbB subfamily. As to quaternary structure, PSII is composed of 1 copy each of membrane proteins PsbA, PsbB, PsbC, PsbD, PsbE, PsbF, PsbH, PsbI, PsbJ, PsbK, PsbL, PsbM, PsbT, PsbX, PsbY, PsbZ, Psb30/Ycf12, at least 3 peripheral proteins of the oxygen-evolving complex and a large number of cofactors. It forms dimeric complexes. Binds multiple chlorophylls. PSII binds additional chlorophylls, carotenoids and specific lipids. is required as a cofactor.

It is found in the plastid. The protein localises to the chloroplast thylakoid membrane. One of the components of the core complex of photosystem II (PSII). It binds chlorophyll and helps catalyze the primary light-induced photochemical processes of PSII. PSII is a light-driven water:plastoquinone oxidoreductase, using light energy to abstract electrons from H(2)O, generating O(2) and a proton gradient subsequently used for ATP formation. The polypeptide is Photosystem II CP47 reaction center protein (Welwitschia mirabilis (Tree tumbo)).